Consider the following 202-residue polypeptide: Na(+)-translocating NADH-quinone reductase subunit E (202 aa).

Transmembrane regions (helical) follow at residues 11–31 (AVFI…FIAI), 35–55 (VETA…TVPA), 79–99 (LSFL…QILE), 114–134 (GVFL…LFMV), 144–164 (VVYG…LAGI), and 180–200 (LGIT…FSGV).

It belongs to the NqrDE/RnfAE family. Composed of six subunits; NqrA, NqrB, NqrC, NqrD, NqrE and NqrF.

The protein resides in the cell inner membrane. It carries out the reaction a ubiquinone + n Na(+)(in) + NADH + H(+) = a ubiquinol + n Na(+)(out) + NAD(+). NQR complex catalyzes the reduction of ubiquinone-1 to ubiquinol by two successive reactions, coupled with the transport of Na(+) ions from the cytoplasm to the periplasm. NqrA to NqrE are probably involved in the second step, the conversion of ubisemiquinone to ubiquinol. This is Na(+)-translocating NADH-quinone reductase subunit E from Stutzerimonas stutzeri (strain A1501) (Pseudomonas stutzeri).